The chain runs to 148 residues: Large ribosomal subunit protein bL9 (148 aa).

It belongs to the bacterial ribosomal protein bL9 family.

Functionally, binds to the 23S rRNA. The protein is Large ribosomal subunit protein bL9 of Streptomyces avermitilis (strain ATCC 31267 / DSM 46492 / JCM 5070 / NBRC 14893 / NCIMB 12804 / NRRL 8165 / MA-4680).